The primary structure comprises 433 residues: 3-phosphoshikimate 1-carboxyvinyltransferase (433 aa).

Lysine 22, serine 23, and arginine 27 together coordinate 3-phosphoshikimate. A phosphoenolpyruvate-binding site is contributed by lysine 22. The phosphoenolpyruvate site is built by glycine 95 and arginine 123. Serine 167, glutamine 169, aspartate 315, and lysine 342 together coordinate 3-phosphoshikimate. A phosphoenolpyruvate-binding site is contributed by glutamine 169. The active-site Proton acceptor is aspartate 315. Positions 346 and 387 each coordinate phosphoenolpyruvate.

This sequence belongs to the EPSP synthase family. As to quaternary structure, monomer.

It is found in the cytoplasm. It catalyses the reaction 3-phosphoshikimate + phosphoenolpyruvate = 5-O-(1-carboxyvinyl)-3-phosphoshikimate + phosphate. Its pathway is metabolic intermediate biosynthesis; chorismate biosynthesis; chorismate from D-erythrose 4-phosphate and phosphoenolpyruvate: step 6/7. Its function is as follows. Catalyzes the transfer of the enolpyruvyl moiety of phosphoenolpyruvate (PEP) to the 5-hydroxyl of shikimate-3-phosphate (S3P) to produce enolpyruvyl shikimate-3-phosphate and inorganic phosphate. This is 3-phosphoshikimate 1-carboxyvinyltransferase from Legionella pneumophila subsp. pneumophila (strain Philadelphia 1 / ATCC 33152 / DSM 7513).